Here is a 208-residue protein sequence, read N- to C-terminus: ATP synthase subunit beta, chloroplastic (208 aa).

Belongs to the ATPase alpha/beta chains family. As to quaternary structure, F-type ATPases have 2 components, CF(1) - the catalytic core - and CF(0) - the membrane proton channel. CF(1) has five subunits: alpha(3), beta(3), gamma(1), delta(1), epsilon(1). CF(0) has four main subunits: a(1), b(1), b'(1) and c(9-12).

It localises to the plastid. Its subcellular location is the chloroplast thylakoid membrane. The catalysed reaction is ATP + H2O + 4 H(+)(in) = ADP + phosphate + 5 H(+)(out). Produces ATP from ADP in the presence of a proton gradient across the membrane. The catalytic sites are hosted primarily by the beta subunits. The sequence is that of ATP synthase subunit beta, chloroplastic (atpB) from Lonchitis hirsuta (Tomato fern).